Here is a 140-residue protein sequence, read N- to C-terminus: uncharacterized protein (140 aa).

2 helical membrane-spanning segments follow: residues 4–21 (ILKF…YLFG) and 26–48 (LVKV…SGYL).

It belongs to the bacteriophage holin family. Cp-1 holin subfamily.

It is found in the cell membrane. This is an uncharacterized protein from Listeria monocytogenes serovar 1/2a (strain ATCC BAA-679 / EGD-e).